A 478-amino-acid polypeptide reads, in one-letter code: MTSLPDRGVSSSSSDPLCEGNIAPCSSSSEQKEDCSLKQSKTSILSCVFNSPFNIFEAHQDSSANKSPKSSSGSYDWSRVLRRIVCSGSMWRFLGTSKVLTSSDVWFLGKCYKLSSEESSSDSDSESGHATFLEDFSSRIWITYRRGFDAISDSKYTSDVNWGCMVRSSQMLVAQALIFHHLGRSWRRPLEKPYNPEYIGILHMFGDSEACAFSIHNLLQAGNSYGLAAGSWVGPYAMCRAWQTLVRTNREQHEVVDGNESFPMALYVVSGDEDGERGGAPVVCIDVAAQLCCDFNKGQSTWSPILLLVPLVLGLDKINPRYIPLLKETFTFPQSLGILGGKPGTSTYIAGVQDDRALYLDPHEVQMAVDIAADNIEADTSSYHCSTVRDLALDLIDPSLAIGFYCRDKDDFDDFCSRATELVDKANGAPLFTVVQSVQPSKQMYNQDDVLGISGDGNINVEDLDASGETGEEEWQIL.

Residues 1–15 (MTSLPDRGVSSSSSD) show a composition bias toward polar residues. The tract at residues 1–31 (MTSLPDRGVSSSSSDPLCEGNIAPCSSSSEQ) is disordered. The Nucleophile role is filled by C164. Catalysis depends on residues D361 and H363.

This sequence belongs to the peptidase C54 family. As to quaternary structure, interacts with ATG8.

Its subcellular location is the cytoplasm. The enzyme catalyses [protein]-C-terminal L-amino acid-glycyl-phosphatidylethanolamide + H2O = [protein]-C-terminal L-amino acid-glycine + a 1,2-diacyl-sn-glycero-3-phosphoethanolamine. Its function is as follows. Cysteine protease that plays a key role in autophagy by mediating both proteolytic activation and delipidation of ATG8 family proteins. The protease activity is required for proteolytic activation of ATG8 family proteins: cleaves the C-terminal amino acid of ATG8 proteins to reveal a C-terminal glycine. Exposure of the glycine at the C-terminus is essential for ATG8 proteins conjugation to phosphatidylethanolamine (PE) and insertion to membranes, which is necessary for autophagy. In addition to the protease activity, also mediates delipidation of PE-conjugated ATG8 proteins. In Oryza sativa subsp. japonica (Rice), this protein is Cysteine protease ATG4B (ATG4B).